We begin with the raw amino-acid sequence, 304 residues long: Bifunctional protein FolD (304 aa).

NADP(+)-binding positions include 170–172, serine 195, and isoleucine 236; that span reads GRS.

The protein belongs to the tetrahydrofolate dehydrogenase/cyclohydrolase family. As to quaternary structure, homodimer.

It carries out the reaction (6R)-5,10-methylene-5,6,7,8-tetrahydrofolate + NADP(+) = (6R)-5,10-methenyltetrahydrofolate + NADPH. The catalysed reaction is (6R)-5,10-methenyltetrahydrofolate + H2O = (6R)-10-formyltetrahydrofolate + H(+). The protein operates within one-carbon metabolism; tetrahydrofolate interconversion. Functionally, catalyzes the oxidation of 5,10-methylenetetrahydrofolate to 5,10-methenyltetrahydrofolate and then the hydrolysis of 5,10-methenyltetrahydrofolate to 10-formyltetrahydrofolate. The sequence is that of Bifunctional protein FolD from Anaplasma phagocytophilum (strain HZ).